The sequence spans 105 residues: Heat shock protein HspQ (105 aa).

Residues 75–105 (SELQDEHPEQPSMDELAQTIRKQLQAPRLRN) form a disordered region.

This sequence belongs to the HspQ family.

It localises to the cytoplasm. Functionally, involved in the degradation of certain denaturated proteins, including DnaA, during heat shock stress. This is Heat shock protein HspQ from Escherichia coli O127:H6 (strain E2348/69 / EPEC).